Consider the following 266-residue polypeptide: Putative pyruvate, phosphate dikinase regulatory protein (266 aa).

149–156 (GVSRTSKT) is a binding site for ADP.

Belongs to the pyruvate, phosphate/water dikinase regulatory protein family. PDRP subfamily.

It catalyses the reaction N(tele)-phospho-L-histidyl/L-threonyl-[pyruvate, phosphate dikinase] + ADP = N(tele)-phospho-L-histidyl/O-phospho-L-threonyl-[pyruvate, phosphate dikinase] + AMP + H(+). The catalysed reaction is N(tele)-phospho-L-histidyl/O-phospho-L-threonyl-[pyruvate, phosphate dikinase] + phosphate + H(+) = N(tele)-phospho-L-histidyl/L-threonyl-[pyruvate, phosphate dikinase] + diphosphate. In terms of biological role, bifunctional serine/threonine kinase and phosphorylase involved in the regulation of the pyruvate, phosphate dikinase (PPDK) by catalyzing its phosphorylation/dephosphorylation. In Geobacillus kaustophilus (strain HTA426), this protein is Putative pyruvate, phosphate dikinase regulatory protein.